The primary structure comprises 367 residues: UDP-N-acetylglucosamine--N-acetylmuramyl-(pentapeptide) pyrophosphoryl-undecaprenol N-acetylglucosamine transferase (367 aa).

UDP-N-acetyl-alpha-D-glucosamine-binding positions include 15–17 (TGG), Asn127, Arg163, Ser191, Ile249, and Gln294.

It belongs to the glycosyltransferase 28 family. MurG subfamily.

It is found in the cell inner membrane. The enzyme catalyses di-trans,octa-cis-undecaprenyl diphospho-N-acetyl-alpha-D-muramoyl-L-alanyl-D-glutamyl-meso-2,6-diaminopimeloyl-D-alanyl-D-alanine + UDP-N-acetyl-alpha-D-glucosamine = di-trans,octa-cis-undecaprenyl diphospho-[N-acetyl-alpha-D-glucosaminyl-(1-&gt;4)]-N-acetyl-alpha-D-muramoyl-L-alanyl-D-glutamyl-meso-2,6-diaminopimeloyl-D-alanyl-D-alanine + UDP + H(+). It functions in the pathway cell wall biogenesis; peptidoglycan biosynthesis. Its function is as follows. Cell wall formation. Catalyzes the transfer of a GlcNAc subunit on undecaprenyl-pyrophosphoryl-MurNAc-pentapeptide (lipid intermediate I) to form undecaprenyl-pyrophosphoryl-MurNAc-(pentapeptide)GlcNAc (lipid intermediate II). The protein is UDP-N-acetylglucosamine--N-acetylmuramyl-(pentapeptide) pyrophosphoryl-undecaprenol N-acetylglucosamine transferase of Burkholderia lata (strain ATCC 17760 / DSM 23089 / LMG 22485 / NCIMB 9086 / R18194 / 383).